We begin with the raw amino-acid sequence, 362 residues long: E3 ubiquitin-protein ligase TM129 (362 aa).

Over 1 to 6 the chain is Lumenal; sequence MDSPEV. The chain crosses the membrane as a helical span at residues 7 to 27; sequence TFTLAYLVFAVCFVFTPNEFH. Residues 28–56 lie on the Cytoplasmic side of the membrane; it reads AAGLTVQNLLSGWLGSEDAAFVPFHLRRT. A helical membrane pass occupies residues 57 to 77; the sequence is AATLLCHSLLPLGYYVGMCLA. Residues 78 to 94 are Lumenal-facing; it reads ASEKRLHALSQAPEAWR. A helical transmembrane segment spans residues 95–115; it reads LFLLLAVTLPSIACILIYYWS. Residues 116–362 are Cytoplasmic-facing; that stretch reads RDRWACHPLA…FCILDVCTVR (247 aa). An RING-type; degenerate zinc finger spans residues 285–350; that stretch reads CIGCMQTRAS…ASRVPCPTCR (66 aa).

It belongs to the TMEM129 family. As to quaternary structure, integral component of ER-resident dislocation complexes.

The protein localises to the endoplasmic reticulum membrane. The enzyme catalyses S-ubiquitinyl-[E2 ubiquitin-conjugating enzyme]-L-cysteine + [acceptor protein]-L-lysine = [E2 ubiquitin-conjugating enzyme]-L-cysteine + N(6)-ubiquitinyl-[acceptor protein]-L-lysine.. The protein operates within protein modification; protein ubiquitination. Its function is as follows. E3 ubiquitin-protein ligase involved in ER-associated protein degradation, preferentially associates with the E2 enzyme UBE2J2. Exploited by viral US11 proteins to mediate HLA class I proteins degradation. The sequence is that of E3 ubiquitin-protein ligase TM129 (TMEM129) from Homo sapiens (Human).